Reading from the N-terminus, the 813-residue chain is MHSCSERRMMTVIWSLCLIFCLSNSILAIAKDLCLPDQRDALLEFKNEFYVQEFDPHMKCEKATETWRNKTDCCSWNRVSCDPKTGKVVELDLMSSCLNGPLRSNSSLFRLQHLQSLELSSNNISGILPDSIGNLKYLRSLSFRTCHLFGKIPSSLGSLSYLTHLDLSYNDFTSEGPDSGGNLNRLTDLQLVLLNLSSVTWIDLGSNQLKGMLPSNMSSLSKLVSFDISENSFSGSIPSSLFMIPSLNFSGPLEIGNISSHSELGYLYMGENNFNGPIPGSLSKLVGLRDLSLSFWNTGRGIVDFSIFLHLKSLCSLDLSYLNTRSMVDLSFFSHLMSLDELDLSGINLKISSTLSFPSATGTLILASCNIVEFPKFLENQTSLFYLDISANHIEGQVPEWLWRLPTLSFVNIAQNSFSGELPMLPNSIYSFIASDNQFSGEIPRTVCELVSLNTLVLSNNKFSGSIPRCFENFKTISILHLRNNSLSGVFPKEIISETLTSLDVGHNWLSGQLPKSLIKCTDLEFLNVEDNRINDKFPFWLRSLSNLQILVLRSNEFYGPIFSLEDSLSFPKLRIFDISENHFTGVLPSDYFAGWSAMSSVVDIFDTTPQVHILGVFQGYYHNSVVLTNKGLNMELVGSGFTIYKTIDVSGNRLEGDIPESIGILKELIVLNMSNNAFTGHIPPSLSNLSNLQSLDLSQNRLSGSIPPELGKLTFLEWMNFSYNRLEGPIPQATQIQSQNSSSFAENPGLCGAPFLNKCGGEEEEEEEATKQEEDEDEEKEEKNQVFSWIAAAIGYVPGVFCGLTIAHILTS.

The signal sequence occupies residues 1–30; it reads MHSCSERRMMTVIWSLCLIFCLSNSILAIA. Over 31 to 786 the chain is Extracellular; it reads KDLCLPDQRD…EDEEKEEKNQ (756 aa). 3 N-linked (GlcNAc...) asparagine glycosylation sites follow: asparagine 69, asparagine 105, and asparagine 123. LRR repeat units follow at residues 111 to 134, 136 to 159, and 160 to 182; these read LQHLQSLELSSNNISGILPDSIGN, KYLRSLSFRTCHLFGKIPSSLGSL, and SYLTHLDLSYNDFTSEGPDSGGN. Residues asparagine 195 and asparagine 216 are each glycosylated (N-linked (GlcNAc...) asparagine). 21 LRR repeats span residues 196-219, 220-244, 245-260, 261-285, 288-310, 311-335, 336-359, 361-381, 382-405, 406-432, 434-450, 451-473, 475-498, 500-521, 523-544, 545-571, 572-595, 642-666, 667-690, 691-714, and 716-739; these read LSSVTWIDLGSNQLKGMLPSNMSS, LSKLVSFDISENSFSGSIPSSLFMI, PSLNFSGPLEIGNISS, HSELGYLYMGENNFNGPIPGSLSKL, LRDLSLSFWNTGRGIVDFSIFLH, LKSLCSLDLSYLNTRSMVDLSFFSH, LMSLDELDLSGINLKISSTLSFPS, TGTLILASCNIVEFPKFLENQ, TSLFYLDISANHIEGQVPEWLWRL, PTLSFVNIAQNSFSGELPMLPNSIYSF, ASDNQFSGEIPRTVCEL, VSLNTLVLSNNKFSGSIPRCFEN, KTISILHLRNNSLSGVFPKEIISE, LTSLDVGHNWLSGQLPKSLIKC, DLEFLNVEDNRINDKFPFWLRS, LSNLQILVLRSNEFYGPIFSLEDSLSF, PKLRIFDISENHFTGVLPSDYFAG, FTIYKTIDVSGNRLEGDIPESIGIL, KELIVLNMSNNAFTGHIPPSLSNL, SNLQSLDLSQNRLSGSIPPELGKL, and FLEWMNFSYNRLEGPIPQATQIQS. 2 N-linked (GlcNAc...) asparagine glycosylation sites follow: asparagine 248 and asparagine 257. Asparagine 380 carries an N-linked (GlcNAc...) asparagine glycan. An N-linked (GlcNAc...) asparagine glycan is attached at asparagine 484. N-linked (GlcNAc...) asparagine glycosylation is found at asparagine 673 and asparagine 689. N-linked (GlcNAc...) asparagine glycosylation is found at asparagine 721 and asparagine 741. The interval 756-785 is disordered; the sequence is FLNKCGGEEEEEEEATKQEEDEDEEKEEKN. A compositionally biased stretch (acidic residues) spans 763–781; that stretch reads EEEEEEEATKQEEDEDEEK. A helical membrane pass occupies residues 787-807; it reads VFSWIAAAIGYVPGVFCGLTI. Topologically, residues 808-813 are cytoplasmic; it reads AHILTS.

Belongs to the RLP family.

It is found in the cell membrane. Plays a role in root hair development. The sequence is that of Receptor-like protein 48 from Arabidopsis thaliana (Mouse-ear cress).